The following is a 632-amino-acid chain: Maltase 1 (632 aa).

The segment covering 1 to 29 has biased composition (basic and acidic residues); the sequence is MEEGERWREGHVYQRSSETRKPTNYDRPD. A disordered region spans residues 1–30; the sequence is MEEGERWREGHVYQRSSETRKPTNYDRPDS. Residues asparagine 179 and asparagine 212 are each glycosylated (N-linked (GlcNAc...) asparagine). Catalysis depends on aspartate 280, which acts as the Nucleophile. N-linked (GlcNAc...) asparagine glycosylation is present at asparagine 333. The active-site Proton donor is the glutamate 348. Asparagine 461, asparagine 575, and asparagine 578 each carry an N-linked (GlcNAc...) asparagine glycan.

The protein belongs to the glycosyl hydrolase 13 family.

The catalysed reaction is Hydrolysis of terminal, non-reducing (1-&gt;4)-linked alpha-D-glucose residues with release of alpha-D-glucose.. The sequence is that of Maltase 1 (Mal-B1) from Drosophila virilis (Fruit fly).